Here is a 354-residue protein sequence, read N- to C-terminus: NADH-quinone oxidoreductase subunit H (354 aa).

The next 8 helical transmembrane spans lie at 25–45 (LVRI…LILW), 91–111 (WIYL…WAVI), 126–146 (LLYA…AGWA), 170–190 (MGFA…SGIV), 205–225 (FLSW…ISGI), 267–287 (IVIS…PFGF), 290–310 (FVPG…VFIW), and 330–350 (IFIP…MSPL).

It belongs to the complex I subunit 1 family. As to quaternary structure, NDH-1 is composed of 14 different subunits. Subunits NuoA, H, J, K, L, M, N constitute the membrane sector of the complex.

It is found in the cell inner membrane. The catalysed reaction is a quinone + NADH + 5 H(+)(in) = a quinol + NAD(+) + 4 H(+)(out). Functionally, NDH-1 shuttles electrons from NADH, via FMN and iron-sulfur (Fe-S) centers, to quinones in the respiratory chain. The immediate electron acceptor for the enzyme in this species is believed to be ubiquinone. Couples the redox reaction to proton translocation (for every two electrons transferred, four hydrogen ions are translocated across the cytoplasmic membrane), and thus conserves the redox energy in a proton gradient. This subunit may bind ubiquinone. The protein is NADH-quinone oxidoreductase subunit H of Paraburkholderia phytofirmans (strain DSM 17436 / LMG 22146 / PsJN) (Burkholderia phytofirmans).